Reading from the N-terminus, the 92-residue chain is Probable Fe(2+)-trafficking protein (92 aa).

Belongs to the Fe(2+)-trafficking protein family.

Its function is as follows. Could be a mediator in iron transactions between iron acquisition and iron-requiring processes, such as synthesis and/or repair of Fe-S clusters in biosynthetic enzymes. This Shewanella baltica (strain OS223) protein is Probable Fe(2+)-trafficking protein.